The chain runs to 468 residues: Mannan endo-1,4-beta-mannosidase 3 (468 aa).

An N-terminal signal peptide occupies residues 1 to 23; that stretch reads MTVRPRPAAAAIIIAAVFGAAAA. Trp-86 is a binding site for substrate. Asn-152 carries N-linked (GlcNAc...) asparagine glycosylation. Position 201 (Asn-201) interacts with substrate. Glu-202 (proton donor) is an active-site residue. Residue Tyr-281 participates in substrate binding. An N-linked (GlcNAc...) asparagine glycan is attached at Asn-300. The active-site Nucleophile is the Glu-321. N-linked (GlcNAc...) asparagine glycosylation occurs at Asn-333. Residues Trp-364 and Asp-371 each coordinate substrate. Positions 415-436 are disordered; it reads LRRRRRRPASSHRKTRLGSGGD. Basic residues predominate over residues 416 to 430; it reads RRRRRRPASSHRKTR.

The protein belongs to the glycosyl hydrolase 5 (cellulase A) family. Expressed in seeds.

The protein localises to the secreted. It carries out the reaction Random hydrolysis of (1-&gt;4)-beta-D-mannosidic linkages in mannans, galactomannans and glucomannans.. The protein is Mannan endo-1,4-beta-mannosidase 3 (MAN3) of Oryza sativa subsp. japonica (Rice).